A 451-amino-acid polypeptide reads, in one-letter code: Porin AaxA (451 aa).

The first 27 residues, 1-27 (MASFHSSLLTALCTLCTYGILTMPAYG), serve as a signal peptide directing secretion.

It belongs to the OprB family.

It is found in the cell outer membrane. Facilitates L-arginine uptake, as part of the AaxABC system. The arginine uptake by the bacterium in the macrophage may be a virulence factor against the host innate immune response. This chain is Porin AaxA (aaxA), found in Chlamydia caviae (strain ATCC VR-813 / DSM 19441 / 03DC25 / GPIC) (Chlamydophila caviae).